A 316-amino-acid chain; its full sequence is Probable metal transport system membrane protein TC_0342 (316 aa).

Transmembrane regions (helical) follow at residues 1–21 (MFAS…IVFF), 39–59 (IQVI…TFLV), 64–84 (AMYA…ACLF), 94–114 (QNLT…IHFI), 124–144 (ASTA…LVFL), 171–191 (FLVL…FICV), 196–216 (VFAF…MFLL), 226–246 (AVGV…AKLI), 252–272 (EMMG…PALS), and 286–306 (SGLA…TVFV).

The protein belongs to the ABC-3 integral membrane protein family.

The protein resides in the cell inner membrane. In terms of biological role, part of an ATP-driven transport system TC_0338/TC_0339/TC_0341/TC_0342 for a metal. The polypeptide is Probable metal transport system membrane protein TC_0342 (Chlamydia muridarum (strain MoPn / Nigg)).